A 346-amino-acid polypeptide reads, in one-letter code: Low-temperature-induced cysteine proteinase (346 aa).

A propeptide spans 1–17 (KLSKNKSDRYLPKVGDS) (activation peptide). Cystine bridges form between Cys-39–Cys-81, Cys-73–Cys-114, Cys-172–Cys-223, Cys-256–Cys-268, and Cys-262–Cys-283. Residue Cys-42 is part of the active site. Residues His-178 and Asn-198 contribute to the active site. N-linked (GlcNAc...) asparagine glycosylation is present at Asn-215. A propeptide spans 238–346 (NPPKPAPSPP…FGNGGKKSSS (109 aa)) (removed in mature form).

The protein belongs to the peptidase C1 family.

The chain is Low-temperature-induced cysteine proteinase from Solanum lycopersicum (Tomato).